Consider the following 200-residue polypeptide: MLLSSLLLLALGYLLGSMPNGYLAGRWLKGIDLRQCGSGSTGATNVLRNVGKGPALVVFLLDVGKGALAVLLAKSFGLNDWVQVLAGLAALAGHIWPVWLGWKGGKAVATGLGMFLGLAWPVGLACLGLFMAVISLSRIVSLSSVVAAIGLPVLMLTSGGSSAYVAVSVVASLMVLWRHRSNIERLLAGTEPRIGEKGKS.

The next 5 helical transmembrane spans lie at M1 to G21, G53 to A73, W81 to G101, M114 to I134, and I139 to G159.

It belongs to the PlsY family. As to quaternary structure, probably interacts with PlsX.

The protein localises to the cell inner membrane. The enzyme catalyses an acyl phosphate + sn-glycerol 3-phosphate = a 1-acyl-sn-glycero-3-phosphate + phosphate. The protein operates within lipid metabolism; phospholipid metabolism. In terms of biological role, catalyzes the transfer of an acyl group from acyl-phosphate (acyl-PO(4)) to glycerol-3-phosphate (G3P) to form lysophosphatidic acid (LPA). This enzyme utilizes acyl-phosphate as fatty acyl donor, but not acyl-CoA or acyl-ACP. The protein is Glycerol-3-phosphate acyltransferase of Synechococcus sp. (strain CC9902).